The chain runs to 308 residues: tRNA dimethylallyltransferase (308 aa).

An ATP-binding site is contributed by 9 to 16; the sequence is GPTAAGKT. Substrate is bound at residue 11–16; it reads TAAGKT. Interaction with substrate tRNA stretches follow at residues 34–37 and 158–162; these read DSMQ and QRLLR.

The protein belongs to the IPP transferase family. Monomer. Mg(2+) is required as a cofactor.

It carries out the reaction adenosine(37) in tRNA + dimethylallyl diphosphate = N(6)-dimethylallyladenosine(37) in tRNA + diphosphate. Catalyzes the transfer of a dimethylallyl group onto the adenine at position 37 in tRNAs that read codons beginning with uridine, leading to the formation of N6-(dimethylallyl)adenosine (i(6)A). This is tRNA dimethylallyltransferase from Maricaulis maris (strain MCS10) (Caulobacter maris).